The chain runs to 442 residues: MAKQGALSALSNGGLSELWARLRFLFLAIIVYRIGAHIPVPGINPDRLAALFRQNEGTILSLFNMFSGGALERMSIFALGIMPYISASIIMQLMTAISPQLEQLKKEGESGRRKISQYTRYGTVVLALVQAIGMSVGLGSQGVAFSNDFGFYFVAVTTFVAGAMFMMWLGEQITERGVGNGISMLIFAGIVAGLPRAIGQSFESARQGDINIFALIGVGLLAVAIIAFVVFIERGQRRIAVHYAKRQQGRKVFAAQTSHLPLKVNMAGVIPAIFASSILLFPASLGSWFGQSEGLGWLQDVAQAIAPGQPLNILLFTAGIVFFCFFYTALMFNPKDVAENLKKSGAFIPGIRPGEQSARYIDGVLTRLTMFGALYMTAVCLLPQFLVVAAHVPFYLGGTSLLIVVVVVMDFMAQVQSHLVSHQYESLMKKANLKGYGSGMLR.

The next 10 membrane-spanning stretches (helical) occupy residues Phe-24 to Asn-44, Ile-76 to Ala-96, Val-125 to Phe-145, Phe-149 to Leu-169, Val-178 to Ile-198, Ile-212 to Ile-232, Val-269 to Phe-289, Asn-312 to Phe-332, Gly-363 to Pro-383, and Phe-385 to Val-405.

This sequence belongs to the SecY/SEC61-alpha family. As to quaternary structure, component of the Sec protein translocase complex. Heterotrimer consisting of SecY, SecE and SecG subunits. The heterotrimers can form oligomers, although 1 heterotrimer is thought to be able to translocate proteins. Interacts with the ribosome. Interacts with SecDF, and other proteins may be involved. Interacts with SecA.

The protein localises to the cell inner membrane. Its function is as follows. The central subunit of the protein translocation channel SecYEG. Consists of two halves formed by TMs 1-5 and 6-10. These two domains form a lateral gate at the front which open onto the bilayer between TMs 2 and 7, and are clamped together by SecE at the back. The channel is closed by both a pore ring composed of hydrophobic SecY resides and a short helix (helix 2A) on the extracellular side of the membrane which forms a plug. The plug probably moves laterally to allow the channel to open. The ring and the pore may move independently. This Pseudomonas aeruginosa (strain ATCC 15692 / DSM 22644 / CIP 104116 / JCM 14847 / LMG 12228 / 1C / PRS 101 / PAO1) protein is Protein translocase subunit SecY.